The sequence spans 379 residues: Alanine racemase (379 aa).

The active-site Proton acceptor; specific for D-alanine is Lys-41. N6-(pyridoxal phosphate)lysine is present on Lys-41. Arg-138 provides a ligand contact to substrate. Tyr-260 serves as the catalytic Proton acceptor; specific for L-alanine. Met-319 provides a ligand contact to substrate.

This sequence belongs to the alanine racemase family. It depends on pyridoxal 5'-phosphate as a cofactor.

It catalyses the reaction L-alanine = D-alanine. The protein operates within amino-acid biosynthesis; D-alanine biosynthesis; D-alanine from L-alanine: step 1/1. Functionally, catalyzes the interconversion of L-alanine and D-alanine. May also act on other amino acids. The polypeptide is Alanine racemase (alr) (Rhizobium meliloti (strain 1021) (Ensifer meliloti)).